Consider the following 225-residue polypeptide: MKKNVQIKGTKDGISIFLSDKASILELQQELTQLLADQKQNPYSGEKLEVQVQIGNRLFSEEEEREISTIIHKNSQMKISAFYSNVMSKDEAKKWKENDQIFSMATIIRSGQVVQVPGDFLLIGDVNPGGQIRSNGNVFVLGNIKGIIHAGFEGNENAVVAGKFLYPSQVRIAGKVYGFDSEDYKEVTETDLFSAFVNDAGEIVIDGIHKIRKIRPEISNFQGGR.

The protein belongs to the MinC family. As to quaternary structure, interacts with MinD and FtsZ.

Cell division inhibitor that blocks the formation of polar Z ring septums. Rapidly oscillates between the poles of the cell to destabilize FtsZ filaments that have formed before they mature into polar Z rings. Prevents FtsZ polymerization. This is Probable septum site-determining protein MinC from Listeria monocytogenes serotype 4a (strain HCC23).